The chain runs to 206 residues: Protein SYM1 (206 aa).

3 helical membrane passes run 16 to 36 (PLITNIITTGFLFGSGDYLAQ), 103 to 123 (LVFAPFIGIPLYYSVMSVLEF), and 155 to 175 (LFNFALIPVQFRLLVVNIFSI).

The protein belongs to the peroxisomal membrane protein PXMP2/4 family.

It is found in the mitochondrion inner membrane. Functionally, may be involved in cellular response to stress. Required to maintain mitochondrial DNA (mtDNA) integrity and stability. In Debaryomyces hansenii (strain ATCC 36239 / CBS 767 / BCRC 21394 / JCM 1990 / NBRC 0083 / IGC 2968) (Yeast), this protein is Protein SYM1 (SYM1).